Reading from the N-terminus, the 291-residue chain is Acetyl-coenzyme A carboxylase carboxyl transferase subunit beta (291 aa).

The CoA carboxyltransferase N-terminal domain maps to 34–291; it reads MWTKCSNCNN…LILHGVNKYE (258 aa). Positions 38, 41, 57, and 60 each coordinate Zn(2+). Residues 38–60 form a C4-type zinc finger; that stretch reads CSNCNNMIYYEDLENNKYVCTKC.

The protein belongs to the AccD/PCCB family. As to quaternary structure, acetyl-CoA carboxylase is a heterohexamer composed of biotin carboxyl carrier protein (AccB), biotin carboxylase (AccC) and two subunits each of ACCase subunit alpha (AccA) and ACCase subunit beta (AccD). It depends on Zn(2+) as a cofactor.

Its subcellular location is the cytoplasm. The catalysed reaction is N(6)-carboxybiotinyl-L-lysyl-[protein] + acetyl-CoA = N(6)-biotinyl-L-lysyl-[protein] + malonyl-CoA. It functions in the pathway lipid metabolism; malonyl-CoA biosynthesis; malonyl-CoA from acetyl-CoA: step 1/1. Component of the acetyl coenzyme A carboxylase (ACC) complex. Biotin carboxylase (BC) catalyzes the carboxylation of biotin on its carrier protein (BCCP) and then the CO(2) group is transferred by the transcarboxylase to acetyl-CoA to form malonyl-CoA. The chain is Acetyl-coenzyme A carboxylase carboxyl transferase subunit beta from Clostridium botulinum (strain Eklund 17B / Type B).